The following is a 222-amino-acid chain: 7-cyano-7-deazaguanine synthase (222 aa).

Residue 8–18 coordinates ATP; the sequence is LSGGLDSATCL. The Zn(2+) site is built by cysteine 187, cysteine 197, cysteine 200, and cysteine 203.

The protein belongs to the QueC family. The cofactor is Zn(2+).

The catalysed reaction is 7-carboxy-7-deazaguanine + NH4(+) + ATP = 7-cyano-7-deazaguanine + ADP + phosphate + H2O + H(+). Its pathway is purine metabolism; 7-cyano-7-deazaguanine biosynthesis. Functionally, catalyzes the ATP-dependent conversion of 7-carboxy-7-deazaguanine (CDG) to 7-cyano-7-deazaguanine (preQ(0)). In Alcanivorax borkumensis (strain ATCC 700651 / DSM 11573 / NCIMB 13689 / SK2), this protein is 7-cyano-7-deazaguanine synthase.